We begin with the raw amino-acid sequence, 443 residues long: Anthocyanidin 3-O-glucoside 5-O-glucosyltransferase 2 (443 aa).

An N-terminal signal peptide occupies residues 1 to 22 (MVRRRVLLATFPAQGHINPALQ). H16 acts as the Proton acceptor in catalysis. H16 lines the an anthocyanidin pocket. UDP-alpha-D-glucose is bound by residues Q340, H355, W358, N359, S360, E363, D379, and Q380.

The protein belongs to the UDP-glycosyltransferase family.

It carries out the reaction an anthocyanidin 3-O-beta-D-glucoside + UDP-alpha-D-glucose = an anthocyanidin 3,5-di-O-beta-D-glucoside + UDP + 2 H(+). It participates in pigment biosynthesis; anthocyanin biosynthesis. In terms of biological role, catalyzes the glucosylation at the O-5 position of anthocyanidin 3-glucosides to form anthocyanidin 3,5-di-O-glucosides using UDP-glucose as sugar donor. Anthocyanidin 3,5-di-O-glucosides are molecules that are responsible for pigmentation. Also acts on anthocyanidin 3-O-(6-O-malonylglucoside). Much less active with hydroxycinnamoylglucose derivatives. No activity in the absence of the 3-O-glucoside group. The protein is Anthocyanidin 3-O-glucoside 5-O-glucosyltransferase 2 (PF3R6) of Perilla frutescens (Beefsteak mint).